A 118-amino-acid chain; its full sequence is UPF0231 protein PM0457 (118 aa).

It belongs to the UPF0231 family.

This chain is UPF0231 protein PM0457, found in Pasteurella multocida (strain Pm70).